The primary structure comprises 628 residues: tRNA(Thr) (cytosine(32)-N(3))-methyltransferase (628 aa).

A compositionally biased stretch (basic and acidic residues) spans 1 to 18 (MGVADLIKKFESISKEEG). 3 disordered regions span residues 1–106 (MGVA…GENA), 124–269 (AEVL…VNDL), and 302–331 (NIAH…TEGS). The segment covering 22–31 (VDTNSSSKPL) has biased composition (polar residues). The segment covering 32-42 (KSNDETKELHQ) has biased composition (basic and acidic residues). A compositionally biased stretch (acidic residues) spans 53–62 (DVNEEFENEP). Ser93 carries the post-translational modification Phosphoserine. Over residues 132-146 (EESDAIQEGVAEETE) the composition is skewed to acidic residues. At Thr150 the chain carries Phosphothreonine. The segment covering 173–186 (PAEEYSQSEEDADI) has biased composition (acidic residues). Positions 196-207 (NAENASQQANDG) are enriched in polar residues. A compositionally biased stretch (basic residues) spans 215–230 (KNKKKKNKKKNKKKRN). Positions 231–240 (GNVNTNANVD) are enriched in polar residues. 2 positions are modified to phosphoserine: Ser321 and Ser326. The residue at position 347 (Thr347) is a Phosphothreonine. The S-adenosyl-L-methionine site is built by Trp399, Tyr403, Gly441, Asp466, Asp492, Leu493, and Ile515.

It belongs to the methyltransferase superfamily. METL family. As to quaternary structure, interacts with SES1.

It is found in the cytoplasm. Its subcellular location is the cytoskeleton. It carries out the reaction cytidine(32) in tRNA(Thr) + S-adenosyl-L-methionine = N(3)-methylcytidine(32) in tRNA(Thr) + S-adenosyl-L-homocysteine + H(+). The enzyme catalyses cytidine(32) in tRNA(Ser) + S-adenosyl-L-methionine = N(3)-methylcytidine(32) in tRNA(Ser) + S-adenosyl-L-homocysteine + H(+). Its function is as follows. S-adenosyl-L-methionine-dependent methyltransferase that mediates N(3)-methylcytidine modification of residue 32 of the tRNA anticodon loop of tRNA(Thr) and tRNA(Ser). N(3)-methylcytidine methylation of tRNA(Thr) requires the N6-threonylcarbamoylation of tRNA (t6A37) by the EKC/KEOPS complex as prerequisite. N(3)-methylcytidine methylation of tRNA(Ser) requires the formation of N(6)-dimethylallyladenosine(37) (i6A37) by MOD5 as prerequisite. Methylation of tRNA(Ser) is also stimulated by SES1. Binds F-actin and shows weak F-actin cross-linking activity. The chain is tRNA(Thr) (cytosine(32)-N(3))-methyltransferase (ABP140) from Saccharomyces cerevisiae (strain ATCC 204508 / S288c) (Baker's yeast).